The following is a 375-amino-acid chain: Flagellin (375 aa).

The protein belongs to the bacterial flagellin family.

It is found in the secreted. It localises to the bacterial flagellum. In terms of biological role, flagellin is the subunit protein which polymerizes to form the filaments of bacterial flagella. Flagella are an important component in the invasiveness of B.bacilliformis. The polypeptide is Flagellin (Bartonella bacilliformis).